Reading from the N-terminus, the 301-residue chain is Peroxisome assembly protein 26 (301 aa).

The Cytoplasmic portion of the chain corresponds to 1–246 (MKNDSSTSAA…DAAASHLLSQ (246 aa)). Residues 247–263 (PFKKSLLAALILCLLVL) form a helical; Signal-anchor for type II membrane protein membrane-spanning segment. Residues 264-301 (RFDPATPSSLPFLYQLAHLFRRIQKATLSRLYPLALRD) are Peroxisomal-facing.

The protein belongs to the peroxin-26 family. In terms of assembly, interacts directly with PEX6 via its cytoplasmic domain. Interacts indirectly with PEX1, via its interaction with PEX6.

The protein localises to the peroxisome membrane. In terms of biological role, peroxisomal docking factor that anchors PEX1 and PEX6 to peroxisome membranes. It is therefore required for the formation of the PEX1-PEX6 AAA ATPase complex, a complex that mediates the extraction of the PEX5 receptor from peroxisomal membrane. This Cricetulus griseus (Chinese hamster) protein is Peroxisome assembly protein 26 (Pex26).